Consider the following 494-residue polypeptide: Aldehyde dehydrogenase (494 aa).

223–228 lines the NAD(+) pocket; that stretch reads GSTTAG. Residues glutamate 245 and cysteine 279 contribute to the active site.

It belongs to the aldehyde dehydrogenase family.

It carries out the reaction an aldehyde + NAD(+) + H2O = a carboxylate + NADH + 2 H(+). It functions in the pathway mycotoxin biosynthesis. In terms of biological role, aldehyde dehydrogenase; part of the gene cluster that mediates the biosynthesis of the selective antifungal agent ascochitine, an o-quinone methide that plays a possible protective role against other microbial competitors in nature and is considered to be important for pathogenicity of legume-associated Didymella species. The pathway probably begins with the synthesis of a keto-aldehyde intermediate by the ascochitine non-reducing polyketide synthase pksAC from successive condensations of 4 malonyl-CoA units, presumably with a simple acetyl-CoA starter unit. Release of the keto-aldehyde intermediate is consistent with the presence of the C-terminal reductive release domain. The HR-PKS (orf7) probably makes a diketide starter unit which is passed to the non-reducing polyketide synthase pksAC for further extension, producing ascochital and ascochitine. The aldehyde dehydrogenase (orf1), the 2-oxoglutarate-dependent dioxygenase (orf3) and the dehydrogenase (orf9) are probably involved in subsequent oxidations of methyl groups to the carboxylic acid of the heterocyclic ring. The ascochitine gene cluster also includes a gene encoding a short peptide with a cupin domain (orf2) that is often found in secondary metabolite gene clusters and which function has still to be determined. In Didymella fabae (Leaf and pod spot disease fungus), this protein is Aldehyde dehydrogenase.